The chain runs to 584 residues: MATAAATQSQPVRVVLRVRPHLPSEANSAEAPCVGLLGSHPGGEVTVQLKDQYTSRNECYKLDAFFGQESRVCEIFDQEVSAVIPGIFEGTNATVFAYGATGSGKTYTMQGTEDLPGLIPLAVSTVLALCTGTWCSVEISYYEVYMERCYDLLEPKAREIMVLDDKDGNLQLKGLAWVPVRSLEEFHEIYSIGVQRRKVAHTGLNDVSSRSHAVLSIRITTDVVKGKLNLIDLAGNEDNRRTCNEGIRLQESAKINQSLFALSNVISALNKKEPRIPYRESKLTRILQDSLGGNSHAVMIACLNPVEYQEAVHTVSLAARSRHVTNHMSSASKQETPKDKVDMEAKLRAWLESKGKTKSIQRMDGLLSPNAIKTPLSMSHKKQSASGRVSGRGKAMDQDGGKIKKVLFDSAARIPAENFHREGTQDIVNTTKKVVLPSLTPCKEDKTGSSLRKALSPISSNMDPQKQRTADDSNCLMLLELRTPMGSCNIVGKVTGATPLDKFIALGSNLKESLIQQYLDFLNVANKEELQKLKGIGERRAEYILELREDSPRPFKSLSDLGNIGLSSKQIQDILCKTATGIFK.

The 314-residue stretch at 11 to 324 (PVRVVLRVRP…VSLAARSRHV (314 aa)) folds into the Kinesin motor domain. 99 to 106 (GATGSGKT) provides a ligand contact to ATP. Disordered regions lie at residues 377 to 398 (SMSHKKQSASGRVSGRGKAMDQ) and 445 to 469 (DKTGSSLRKALSPISSNMDPQKQRT).

Belongs to the TRAFAC class myosin-kinesin ATPase superfamily. Kinesin family. KIN-10 subfamily.

This is Kinesin-like protein KIN-10C from Oryza sativa subsp. japonica (Rice).